The following is a 439-amino-acid chain: MSTLFLNARLLNPAENLDTVGSIKIGDDGLIEAVATGGESIPAKAEDNVIDLAGKVLAPGLFDMHCHFREPGQEYKETLETGSAAAVAGGFTGVALMPNTRPVIDSPLGVAYIRHHSAGLPIDLEVIGAMTVESRGEALAPYGKYASYSVKAVSDDGTAIQSSQIMRLAIEYAANFDLLLIQHAEDKHLTAGGIMNDGAVSAMLGLKGIPEVAEPIMIARDLQLIAWLKKHKLNGAVAEPRYHVAHISTAESVALVRKAKAAGLKVTCEVTPHHFTLTEHDLSSSIEKGNFIMKPPLASVENRDALIEGLRDGTIDAIATDHAPHAKHEKECPPDQAAFGIIGLETSLGLTITELVDKGVITLSQAIELLSTNPRRIMGLETILFRAGRKANLTIIDPDCEWIVSESDFGSKSRNTPFMGRKLKGRALGIYHNSKLIMR.

The Zn(2+) site is built by His65 and His67. Substrate-binding positions include 67–69 and Asn99; that span reads HFR. The Zn(2+) site is built by Asp156, His183, His246, and Asp321. Residue Asp321 is part of the active site. Residues His325 and 339–340 each bind substrate; that span reads FG.

It belongs to the metallo-dependent hydrolases superfamily. DHOase family. Class I DHOase subfamily. Zn(2+) serves as cofactor.

It carries out the reaction (S)-dihydroorotate + H2O = N-carbamoyl-L-aspartate + H(+). It functions in the pathway pyrimidine metabolism; UMP biosynthesis via de novo pathway; (S)-dihydroorotate from bicarbonate: step 3/3. Its function is as follows. Catalyzes the reversible cyclization of carbamoyl aspartate to dihydroorotate. The sequence is that of Dihydroorotase from Chlorobaculum tepidum (strain ATCC 49652 / DSM 12025 / NBRC 103806 / TLS) (Chlorobium tepidum).